A 206-amino-acid polypeptide reads, in one-letter code: Large ribosomal subunit protein uL4 (206 aa).

The protein belongs to the universal ribosomal protein uL4 family. As to quaternary structure, part of the 50S ribosomal subunit.

Functionally, one of the primary rRNA binding proteins, this protein initially binds near the 5'-end of the 23S rRNA. It is important during the early stages of 50S assembly. It makes multiple contacts with different domains of the 23S rRNA in the assembled 50S subunit and ribosome. Its function is as follows. Forms part of the polypeptide exit tunnel. This chain is Large ribosomal subunit protein uL4, found in Methylocella silvestris (strain DSM 15510 / CIP 108128 / LMG 27833 / NCIMB 13906 / BL2).